A 341-amino-acid polypeptide reads, in one-letter code: Paired box protein Pax-9 (341 aa).

Positions 4–130 (AFGEVNQLGG…SSISRILRNK (127 aa)) form a DNA-binding region, paired. The PAI subdomain stretch occupies residues 7 to 63 (EVNQLGGVFVNGRPLPNAIRLRIVELAQLGIRPCDISRQLRVSHGCVSKILARYNET). Residues 82–130 (TVVKHIRTYKQRDPGIFAWEIRDRLLADGVCDKYNVPSVSSISRILRNK) are RED subdomain. Positions 168–189 (AAAAKVPTPPGVPAIPGSVAMP) are interaction with KDM5B.

In terms of assembly, interacts with KDM5B.

It localises to the nucleus. Its function is as follows. Transcription factor required for normal development of thymus, parathyroid glands, ultimobranchial bodies, teeth, skeletal elements of skull and larynx as well as distal limbs. This is Paired box protein Pax-9 (PAX9) from Macaca mulatta (Rhesus macaque).